A 384-amino-acid chain; its full sequence is MAVQKIIITPILVFLVTIFFNVSSSSSSNNSQYQFLNHGVRSAYWPAGDDFSPSLIDTNYFTHILLAFIQPEPISFKLEITKSGIKWGQNFIKALRHRSPPVKTLLSIGGGGSNSTLFSEIASTKQNREIFINSTIEVARKYRFDGVDLDWEFPETQQDMFNLGLLYEEWYNALFAEAKVRRKPRLLLTSAVYYNSTVRLIGKHGPRSYPTQAINKYLDWASPMCFDYHGTWDNNTDFNAALYDSKSEISTNFGLHSWIKSGVRPEKLVMGLALYGRAWELKDPNVNGVGAEAVGPATDTDGSMNYNEILKFNKQSGANVVYDKVAISFYSYAGTTWIGYDDGPSITTKVRFAKSLGLKGYFFWALGKDKDWSISKQASNAWGH.

A signal peptide spans 1–27 (MAVQKIIITPILVFLVTIFFNVSSSSS). N-linked (GlcNAc...) asparagine glycosylation is found at asparagine 29, asparagine 114, and asparagine 133. The 346-residue stretch at 39 to 384 (GVRSAYWPAG…SKQASNAWGH (346 aa)) folds into the GH18 domain. The active-site Proton donor is glutamate 152. Residues asparagine 195 and asparagine 234 are each glycosylated (N-linked (GlcNAc...) asparagine).

This sequence belongs to the glycosyl hydrolase 18 family. Chitinase class V subfamily.

The enzyme catalyses Random endo-hydrolysis of N-acetyl-beta-D-glucosaminide (1-&gt;4)-beta-linkages in chitin and chitodextrins.. Its pathway is glycan degradation; chitin degradation. Its function is as follows. Possesses chitinase activity in vitro toward glycol chitin, carboxymethyl-chitin, colloidal chitin, and the chitin oligosaccharides (N-acetylglucosamine) (GlcNAc)6 and (GlcNAc)5. Hydrolyzes (GlcNAc)6 into (GlcNAc)4 and (GlcNAc)2, or two (GlcNAc)3 molecules. Has the capacity to inhibit hyphal growth of the fungus Trichoderma viride in an agar-plate bioassay. This Medicago truncatula (Barrel medic) protein is Class V chitinase CHIT5a.